The chain runs to 125 residues: Small ribosomal subunit protein uS13 (125 aa).

Residues 97–125 (PVRGQKTRSNARTRKGPRPSRIKTKKKSS) are disordered. The span at 101 to 125 (QKTRSNARTRKGPRPSRIKTKKKSS) shows a compositional bias: basic residues.

It belongs to the universal ribosomal protein uS13 family. Part of the 30S ribosomal subunit. Forms a loose heterodimer with protein S19. Forms two bridges to the 50S subunit in the 70S ribosome.

Located at the top of the head of the 30S subunit, it contacts several helices of the 16S rRNA. In the 70S ribosome it contacts the 23S rRNA (bridge B1a) and protein L5 of the 50S subunit (bridge B1b), connecting the 2 subunits; these bridges are implicated in subunit movement. Contacts the tRNAs in the A and P-sites. This Thermotoga maritima (strain ATCC 43589 / DSM 3109 / JCM 10099 / NBRC 100826 / MSB8) protein is Small ribosomal subunit protein uS13.